The primary structure comprises 171 residues: Nucleoside-triphosphatase THEP1 (171 aa).

ATP is bound by residues 8-15 and 95-102; these read GPPGAGKS and VYLIDEIG.

This sequence belongs to the THEP1 NTPase family.

The enzyme catalyses a ribonucleoside 5'-triphosphate + H2O = a ribonucleoside 5'-diphosphate + phosphate + H(+). In terms of biological role, has nucleotide phosphatase activity towards ATP, GTP, CTP, TTP and UTP. May hydrolyze nucleoside diphosphates with lower efficiency. This is Nucleoside-triphosphatase THEP1 from Ignicoccus hospitalis (strain KIN4/I / DSM 18386 / JCM 14125).